Reading from the N-terminus, the 90-residue chain is Auxin-responsive protein SAUR23 (90 aa).

This sequence belongs to the ARG7 family.

It localises to the cell membrane. Functions as a positive effector of cell expansion through modulation of auxin transport. In Arabidopsis thaliana (Mouse-ear cress), this protein is Auxin-responsive protein SAUR23.